A 739-amino-acid polypeptide reads, in one-letter code: MAAVISNSSGTELYVDPTKAIPDLCINDVVLSTPPCYAEETLVQPSAEINTSNSSEKPIVPEISSSDVMVHSAVENLPTSDMKLWTAQRDSAVKLRLEDSDVASLPPVTIHQLFQETVNKYGDYVALASKQGDQWHKMSYKQYYEQCRIAAKGFIKLGLERYHGVGILGFNSAEWFIADVGAIFAGGFAVGIYTTNSAEACHYVAQNCEANIIVVENQKQLQKILQVQDQLPHLKAIIQYKDELKEKRPNLYTWKEFMQLGKDIPDSQLDQIISSQKPNQCCTLIYTSGTTGQPKGVMLSHDNITWTAAAAGKTVRLREATDLQEIVVSYLPLSHIAAQMIDIWLTMKYGGATYFAQPDALKGSLAITLREVRPTAFMGVPRVWEKMQEKMKAVGAKSSTIKRKMATWAKGVGLETNLKKMNGSTPHPMKYHVANKLVFKKVRKALGLDRCTKCYTGAAPITKDTLEFFLSLNIPVYELYGMSESSGPHTISLPDAFRITSCGKVISGCKTKIHQPDSDGSGEILFWGRHVFMGYLNMEDKTHESLDEEGWLHSGDIGKHDENGFLYITGRIKELIITAGGENIPPVPTEDAVKEQVPIISNAMLIGDKKKFLSMLLTLKCNVNADTGEPEDELTPEAIQFCRQIGSKATLVSDIVGGKDTAVYAAIQEGVNSVNEKSTSNAQKVQKWLILEKDFSITGGELGPTMKLKRPVVAKMYKDQIDSFYQDAGTPTENFTPPK.

ATP is bound by residues 287–295 (TSGTTGQPK), 478–483 (ELYGMS), aspartate 556, arginine 571, and lysine 684.

It belongs to the ATP-dependent AMP-binding enzyme family. Bubblegum subfamily.

Its subcellular location is the cytoplasm. It catalyses the reaction a long-chain fatty acid + ATP + CoA = a long-chain fatty acyl-CoA + AMP + diphosphate. The catalysed reaction is (5Z,8Z,11Z,14Z)-eicosatetraenoate + ATP + CoA = (5Z,8Z,11Z,14Z)-eicosatetraenoyl-CoA + AMP + diphosphate. It carries out the reaction hexadecanoate + ATP + CoA = hexadecanoyl-CoA + AMP + diphosphate. The enzyme catalyses (9Z)-octadecenoate + ATP + CoA = (9Z)-octadecenoyl-CoA + AMP + diphosphate. It catalyses the reaction (9Z,12Z)-octadecadienoate + ATP + CoA = (9Z,12Z)-octadecadienoyl-CoA + AMP + diphosphate. The catalysed reaction is tetracosanoate + ATP + CoA = tetracosanoyl-CoA + AMP + diphosphate. In terms of biological role, catalyzes the conversion of fatty acids such as long chain and very long-chain fatty acids to their active form acyl-CoAs for both synthesis of cellular lipids, and degradation via beta-oxidation. Can activate diverse saturated, monosaturated and polyunsaturated fatty acids. The polypeptide is Long-chain-fatty-acid--CoA ligase ACSBG2 (Xenopus laevis (African clawed frog)).